A 295-amino-acid chain; its full sequence is Taste receptor type 2 member 120 (295 aa).

Topologically, residues M1–E5 are extracellular. The chain crosses the membrane as a helical span at residues W6–I26. Over M27–R45 the chain is Cytoplasmic. The chain crosses the membrane as a helical span at residues I46–H66. Over S67 to S83 the chain is Extracellular. Residues G84–F104 traverse the membrane as a helical segment. The Cytoplasmic portion of the chain corresponds to Y105–D125. A helical membrane pass occupies residues S126–V146. At N147–L177 the chain is on the extracellular side. N-linked (GlcNAc...) asparagine glycosylation occurs at N160. A helical membrane pass occupies residues L178 to I198. At Y199–V230 the chain is on the cytoplasmic side. A helical membrane pass occupies residues V231–I251. Residues Q252–P255 lie on the Extracellular side of the membrane. A helical membrane pass occupies residues I256 to I276. Residues W277–C295 lie on the Cytoplasmic side of the membrane.

Belongs to the G-protein coupled receptor T2R family.

Its subcellular location is the membrane. In terms of biological role, putative taste receptor which may play a role in the perception of bitterness. This is Taste receptor type 2 member 120 from Rattus norvegicus (Rat).